The sequence spans 312 residues: Ribosomal protein L11 methyltransferase (312 aa).

Thr-164, Gly-185, Asp-207, and Asn-249 together coordinate S-adenosyl-L-methionine.

This sequence belongs to the methyltransferase superfamily. PrmA family.

It localises to the cytoplasm. It carries out the reaction L-lysyl-[protein] + 3 S-adenosyl-L-methionine = N(6),N(6),N(6)-trimethyl-L-lysyl-[protein] + 3 S-adenosyl-L-homocysteine + 3 H(+). Its function is as follows. Methylates ribosomal protein L11. The protein is Ribosomal protein L11 methyltransferase of Clostridium novyi (strain NT).